A 649-amino-acid chain; its full sequence is Threonine--tRNA ligase (649 aa).

In terms of domain architecture, TGS spans 1-60 (MHVTLPDGKQLDLQAGATALDVARALGPRLAQDALAALVNGELMDLMTPLPEGAQVRLIT). A catalytic region spans residues 248 to 544 (DHRKLGRELE…LIEHYGGDFP (297 aa)). Residues C341, H392, and H521 each contribute to the Zn(2+) site.

The protein belongs to the class-II aminoacyl-tRNA synthetase family. Homodimer. Requires Zn(2+) as cofactor.

It is found in the cytoplasm. The enzyme catalyses tRNA(Thr) + L-threonine + ATP = L-threonyl-tRNA(Thr) + AMP + diphosphate + H(+). Its function is as follows. Catalyzes the attachment of threonine to tRNA(Thr) in a two-step reaction: L-threonine is first activated by ATP to form Thr-AMP and then transferred to the acceptor end of tRNA(Thr). Also edits incorrectly charged L-seryl-tRNA(Thr). The sequence is that of Threonine--tRNA ligase from Deinococcus geothermalis (strain DSM 11300 / CIP 105573 / AG-3a).